The primary structure comprises 66 residues: Large ribosomal subunit protein bL33c (66 aa).

The protein belongs to the bacterial ribosomal protein bL33 family.

The protein localises to the plastid. The protein resides in the chloroplast. The polypeptide is Large ribosomal subunit protein bL33c (Platanus occidentalis (Sycamore)).